The primary structure comprises 503 residues: ATP synthase subunit alpha (503 aa).

170–177 (GDKQTGKT) contributes to the ATP binding site.

Belongs to the ATPase alpha/beta chains family. F-type ATPases have 2 components, CF(1) - the catalytic core - and CF(0) - the membrane proton channel. CF(1) has five subunits: alpha(3), beta(3), gamma(1), delta(1), epsilon(1). CF(0) has three main subunits: a(1), b(2) and c(9-12). The alpha and beta chains form an alternating ring which encloses part of the gamma chain. CF(1) is attached to CF(0) by a central stalk formed by the gamma and epsilon chains, while a peripheral stalk is formed by the delta and b chains.

It localises to the cell inner membrane. The catalysed reaction is ATP + H2O + 4 H(+)(in) = ADP + phosphate + 5 H(+)(out). Produces ATP from ADP in the presence of a proton gradient across the membrane. The alpha chain is a regulatory subunit. This Helicobacter pylori (strain HPAG1) protein is ATP synthase subunit alpha.